The primary structure comprises 340 residues: Maltose epimerase (340 aa).

Arg79 contacts substrate. Catalysis depends on His178, which acts as the Proton donor. Asp247 lines the substrate pocket. The active-site Proton acceptor is the Glu305.

The protein belongs to the aldose epimerase family.

The enzyme catalyses alpha-maltose = beta-maltose. It functions in the pathway carbohydrate metabolism; hexose metabolism. Its function is as follows. Catalyzes the interconversion of alpha and beta anomers of maltose. This chain is Maltose epimerase, found in Levilactobacillus brevis (strain ATCC 367 / BCRC 12310 / CIP 105137 / JCM 1170 / LMG 11437 / NCIMB 947 / NCTC 947) (Lactobacillus brevis).